The primary structure comprises 216 residues: Thiopurine S-methyltransferase (216 aa).

Residues Trp10, Leu45, Glu66, and Arg123 each contribute to the S-adenosyl-L-methionine site.

Belongs to the class I-like SAM-binding methyltransferase superfamily. TPMT family.

The protein localises to the cytoplasm. It catalyses the reaction S-adenosyl-L-methionine + a thiopurine = S-adenosyl-L-homocysteine + a thiopurine S-methylether.. The protein is Thiopurine S-methyltransferase of Pseudomonas putida (strain GB-1).